A 59-amino-acid chain; its full sequence is uncharacterized protein (59 aa).

This is an uncharacterized protein from Acheta domesticus (House cricket).